A 133-amino-acid chain; its full sequence is Profilin-3 (133 aa).

The cysteines at positions 13 and 117 are disulfide-linked. The short motif at 83 to 99 (AVIRGKKGSGGITIKKT) is the Involved in PIP2 interaction element. Threonine 113 is modified (phosphothreonine).

The protein belongs to the profilin family. Occurs in many kinds of cells as a complex with monomeric actin in a 1:1 ratio. Post-translationally, phosphorylated by MAP kinases.

The protein localises to the cytoplasm. The protein resides in the cytoskeleton. Functionally, binds to actin and affects the structure of the cytoskeleton. At high concentrations, profilin prevents the polymerization of actin, whereas it enhances it at low concentrations. In Corylus avellana (European hazel), this protein is Profilin-3.